The following is a 946-amino-acid chain: Bifunctional glutamine synthetase adenylyltransferase/adenylyl-removing enzyme (946 aa).

The segment at 1-440 (MKPLSSPLQQ…VFNELIGDDE (440 aa)) is adenylyl removase. The tract at residues 449–946 (SEQWRELWQD…ASWQKWLVEE (498 aa)) is adenylyl transferase.

This sequence belongs to the GlnE family. It depends on Mg(2+) as a cofactor.

The enzyme catalyses [glutamine synthetase]-O(4)-(5'-adenylyl)-L-tyrosine + phosphate = [glutamine synthetase]-L-tyrosine + ADP. The catalysed reaction is [glutamine synthetase]-L-tyrosine + ATP = [glutamine synthetase]-O(4)-(5'-adenylyl)-L-tyrosine + diphosphate. Its function is as follows. Involved in the regulation of glutamine synthetase GlnA, a key enzyme in the process to assimilate ammonia. When cellular nitrogen levels are high, the C-terminal adenylyl transferase (AT) inactivates GlnA by covalent transfer of an adenylyl group from ATP to specific tyrosine residue of GlnA, thus reducing its activity. Conversely, when nitrogen levels are low, the N-terminal adenylyl removase (AR) activates GlnA by removing the adenylyl group by phosphorolysis, increasing its activity. The regulatory region of GlnE binds the signal transduction protein PII (GlnB) which indicates the nitrogen status of the cell. This Escherichia coli O127:H6 (strain E2348/69 / EPEC) protein is Bifunctional glutamine synthetase adenylyltransferase/adenylyl-removing enzyme.